The sequence spans 503 residues: AMP phosphorylase (503 aa).

Residues G168, 194–199 (SRAITS), and T203 contribute to the AMP site. D256 serves as the catalytic Proton donor. Positions 264 and 288 each coordinate AMP.

It belongs to the thymidine/pyrimidine-nucleoside phosphorylase family. Type 2 subfamily. In terms of assembly, forms an exceptionally large macromolecular structure (&gt;40-mers) in solution.

It carries out the reaction AMP + phosphate = alpha-D-ribose 1,5-bisphosphate + adenine. It catalyses the reaction CMP + phosphate = cytosine + alpha-D-ribose 1,5-bisphosphate. The enzyme catalyses UMP + phosphate = alpha-D-ribose 1,5-bisphosphate + uracil. Its activity is regulated as follows. AMP phosphorolysis is allosterically regulated by the substrate AMP. In terms of biological role, catalyzes the conversion of AMP and phosphate to adenine and ribose 1,5-bisphosphate (R15P). Exhibits phosphorylase activity toward CMP, dCMP and UMP in addition to AMP. Functions in an archaeal AMP degradation pathway, together with R15P isomerase and RubisCO. The chain is AMP phosphorylase from Thermococcus kodakarensis (strain ATCC BAA-918 / JCM 12380 / KOD1) (Pyrococcus kodakaraensis (strain KOD1)).